Reading from the N-terminus, the 288-residue chain is Fibroblast growth factor 2 (288 aa).

The propeptide occupies 1-142 (MVGVGGGDVE…TMAAGSITTL (142 aa)). The interval 1–156 (MVGVGGGDVE…EDGGSGAFPP (156 aa)) is disordered. The segment covering 72-84 (ERPSGSRLGDHGR) has biased composition (basic and acidic residues). An omega-N-methylarginine; alternate mark is found at Arg-108, Arg-110, and Arg-112. 3 positions are modified to symmetric dimethylarginine; alternate: Arg-108, Arg-110, and Arg-112. A compositionally biased stretch (low complexity) spans 113-132 (GTAAPRAAPAARGSRPGPAG). Asn-169 serves as a coordination point for heparin. The Cell attachment site; atypical motif lies at 179–181 (DGR). At Tyr-215 the chain carries Phosphotyrosine; by TEC. The Cell attachment site; atypical motif lies at 221–223 (DGR). Lys-228 is covalently cross-linked (Glycyl lysine isopeptide (Lys-Gly) (interchain with G-Cter in SUMO1)). A heparin-binding region spans residues 261–277 (KRTGQYKLGSKTGPGQK).

Belongs to the heparin-binding growth factors family. In terms of assembly, monomer. Homodimer. Interacts with FGFR1, FGFR2, FGFR3 and FGFR4. Affinity between fibroblast growth factors (FGFs) and their receptors is increased by heparan sulfate glycosaminoglycans that function as coreceptors. Interacts with CSPG4, FGFBP1 and TEC. Found in a complex with FGFBP1, FGF1 and FGF2. Interacts with FGFBP3. Interacts with integrin ITGAV:ITGB3; the interaction is required for FGF2 signaling. Interacts with SNORC (via the extracellular domain). Interacts with glypican GPC3. Phosphorylation at Tyr-215 regulates FGF2 unconventional secretion.

It is found in the secreted. It localises to the nucleus. Acts as a ligand for FGFR1, FGFR2, FGFR3 and FGFR4. Also acts as an integrin ligand which is required for FGF2 signaling. Binds to integrin ITGAV:ITGB3. Plays an important role in the regulation of cell survival, cell division, cell differentiation and cell migration. Functions as a potent mitogen in vitro. Can induce angiogenesis. Mediates phosphorylation of ERK1/2 and thereby promotes retinal lens fiber differentiation. In Pan troglodytes (Chimpanzee), this protein is Fibroblast growth factor 2.